The chain runs to 352 residues: Galactokinase (352 aa).

14–17 (EHTD) contributes to the substrate binding site. Residues S46 and 96–102 (GAGLSSS) each bind ATP. Residues S102 and E134 each coordinate Mg(2+). D146 serves as the catalytic Proton acceptor. Y196 contacts substrate.

Belongs to the GHMP kinase family. GalK subfamily.

Its subcellular location is the cytoplasm. It catalyses the reaction alpha-D-galactose + ATP = alpha-D-galactose 1-phosphate + ADP + H(+). The protein operates within carbohydrate metabolism; galactose metabolism. Catalyzes the transfer of the gamma-phosphate of ATP to D-galactose to form alpha-D-galactose-1-phosphate (Gal-1-P). This Thermosipho africanus (strain TCF52B) protein is Galactokinase.